The primary structure comprises 316 residues: 4-hydroxy-3-methylbut-2-enyl diphosphate reductase (316 aa).

[4Fe-4S] cluster is bound at residue C12. (2E)-4-hydroxy-3-methylbut-2-enyl diphosphate contacts are provided by H43 and H81. Residues H43 and H81 each contribute to the dimethylallyl diphosphate site. Positions 43 and 81 each coordinate isopentenyl diphosphate. Residue C103 coordinates [4Fe-4S] cluster. (2E)-4-hydroxy-3-methylbut-2-enyl diphosphate is bound at residue H131. Position 131 (H131) interacts with dimethylallyl diphosphate. Isopentenyl diphosphate is bound at residue H131. E133 acts as the Proton donor in catalysis. T170 contributes to the (2E)-4-hydroxy-3-methylbut-2-enyl diphosphate binding site. A [4Fe-4S] cluster-binding site is contributed by C198. (2E)-4-hydroxy-3-methylbut-2-enyl diphosphate is bound by residues S226, N228, and S271. Dimethylallyl diphosphate contacts are provided by S226, N228, and S271. 3 residues coordinate isopentenyl diphosphate: S226, N228, and S271.

Belongs to the IspH family. It depends on [4Fe-4S] cluster as a cofactor.

It carries out the reaction isopentenyl diphosphate + 2 oxidized [2Fe-2S]-[ferredoxin] + H2O = (2E)-4-hydroxy-3-methylbut-2-enyl diphosphate + 2 reduced [2Fe-2S]-[ferredoxin] + 2 H(+). It catalyses the reaction dimethylallyl diphosphate + 2 oxidized [2Fe-2S]-[ferredoxin] + H2O = (2E)-4-hydroxy-3-methylbut-2-enyl diphosphate + 2 reduced [2Fe-2S]-[ferredoxin] + 2 H(+). It functions in the pathway isoprenoid biosynthesis; dimethylallyl diphosphate biosynthesis; dimethylallyl diphosphate from (2E)-4-hydroxy-3-methylbutenyl diphosphate: step 1/1. The protein operates within isoprenoid biosynthesis; isopentenyl diphosphate biosynthesis via DXP pathway; isopentenyl diphosphate from 1-deoxy-D-xylulose 5-phosphate: step 6/6. Its function is as follows. Catalyzes the conversion of 1-hydroxy-2-methyl-2-(E)-butenyl 4-diphosphate (HMBPP) into a mixture of isopentenyl diphosphate (IPP) and dimethylallyl diphosphate (DMAPP). Acts in the terminal step of the DOXP/MEP pathway for isoprenoid precursor biosynthesis. The protein is 4-hydroxy-3-methylbut-2-enyl diphosphate reductase of Bacillus anthracis (strain A0248).